We begin with the raw amino-acid sequence, 115 residues long: Small ribosomal subunit protein bS18c (115 aa).

Residues 91 to 115 (TNALKARTQNKDQKKEKFQINKKKK) form a disordered region. The segment covering 99–109 (QNKDQKKEKFQ) has biased composition (basic and acidic residues).

The protein belongs to the bacterial ribosomal protein bS18 family. In terms of assembly, part of the 30S ribosomal subunit.

Its subcellular location is the plastid. It is found in the chloroplast. The chain is Small ribosomal subunit protein bS18c from Ipomoea purpurea (Common morning glory).